We begin with the raw amino-acid sequence, 225 residues long: NAD(P)H-quinone oxidoreductase subunit K, chloroplastic (225 aa).

Residues Cys-43, Cys-44, Cys-108, and Cys-139 each coordinate [4Fe-4S] cluster.

This sequence belongs to the complex I 20 kDa subunit family. In terms of assembly, NDH is composed of at least 16 different subunits, 5 of which are encoded in the nucleus. [4Fe-4S] cluster is required as a cofactor.

It is found in the plastid. It localises to the chloroplast thylakoid membrane. The enzyme catalyses a plastoquinone + NADH + (n+1) H(+)(in) = a plastoquinol + NAD(+) + n H(+)(out). It catalyses the reaction a plastoquinone + NADPH + (n+1) H(+)(in) = a plastoquinol + NADP(+) + n H(+)(out). Its function is as follows. NDH shuttles electrons from NAD(P)H:plastoquinone, via FMN and iron-sulfur (Fe-S) centers, to quinones in the photosynthetic chain and possibly in a chloroplast respiratory chain. The immediate electron acceptor for the enzyme in this species is believed to be plastoquinone. Couples the redox reaction to proton translocation, and thus conserves the redox energy in a proton gradient. The polypeptide is NAD(P)H-quinone oxidoreductase subunit K, chloroplastic (Eucalyptus globulus subsp. globulus (Tasmanian blue gum)).